Reading from the N-terminus, the 333-residue chain is Eukaryotic translation initiation factor 3 subunit H-B (333 aa).

The region spanning 20–154 (IQIEGLVVMK…LKAYRLTPKL (135 aa)) is the MPN domain. Residues 249–295 (SKQQQQKHQYVQRRQQENAQRQSRGEPPLPEEDLTKMFKPPQPPPRM) form a disordered region. The segment covering 250 to 261 (KQQQQKHQYVQR) has biased composition (low complexity).

This sequence belongs to the eIF-3 subunit H family. Component of the eukaryotic translation initiation factor 3 (eIF-3) complex, which is composed of 13 subunits: eif3a, eif3b, eif3c, eif3d, eif3e, eif3f, eif3g, eif3h, eif3i, eif3j, eif3k, eif3l and eif3m.

It localises to the cytoplasm. Its function is as follows. Component of the eukaryotic translation initiation factor 3 (eIF-3) complex, which is involved in protein synthesis of a specialized repertoire of mRNAs and, together with other initiation factors, stimulates binding of mRNA and methionyl-tRNAi to the 40S ribosome. The eIF-3 complex specifically targets and initiates translation of a subset of mRNAs involved in cell proliferation. This is Eukaryotic translation initiation factor 3 subunit H-B (eif3hb) from Danio rerio (Zebrafish).